The following is a 203-amino-acid chain: MRYPWFRLAIFVVGCLFPAWWLYEAAMSLLGPDPGKIMMDRLGLGALTFLLVTLCMTPLQKLTGWSGWIVVRRQLGLWVFAYIVLHILAYLFFILGLDWGQLAVELRKRPYIIVGALGFLGLLVLAITSNRYSQRRLGARWKKLHRLVYAVLGLGLLHFLWIVRSDLREWSIYALIGAVLMVLRIPAVARGLPRVARARGRAV.

A run of 6 helical transmembrane segments spans residues Ile-10–Leu-30, Leu-42–Leu-62, Leu-75–Leu-95, Pro-110–Asn-130, Leu-147–Leu-167, and Glu-169–Ala-189.

The protein belongs to the MsrQ family. In terms of assembly, heterodimer of a catalytic subunit (MsrP) and a heme-binding subunit (MsrQ). Requires FMN as cofactor. Heme b serves as cofactor.

It is found in the cell inner membrane. Part of the MsrPQ system that repairs oxidized periplasmic proteins containing methionine sulfoxide residues (Met-O), using respiratory chain electrons. Thus protects these proteins from oxidative-stress damage caused by reactive species of oxygen and chlorine generated by the host defense mechanisms. MsrPQ is essential for the maintenance of envelope integrity under bleach stress, rescuing a wide series of structurally unrelated periplasmic proteins from methionine oxidation. MsrQ provides electrons for reduction to the reductase catalytic subunit MsrP, using the quinone pool of the respiratory chain. The chain is Protein-methionine-sulfoxide reductase heme-binding subunit MsrQ from Pseudomonas putida (strain GB-1).